Here is a 92-residue protein sequence, read N- to C-terminus: Small ribosomal subunit protein uS19c (92 aa).

It belongs to the universal ribosomal protein uS19 family.

Its subcellular location is the plastid. It is found in the chloroplast. In terms of biological role, protein S19 forms a complex with S13 that binds strongly to the 16S ribosomal RNA. This chain is Small ribosomal subunit protein uS19c, found in Nymphaea alba (White water-lily).